A 153-amino-acid polypeptide reads, in one-letter code: ORM1-like protein 3 (153 aa).

The important for ceramide level-sensing stretch occupies residues 1-17 (MNVGTAHSEVNPNTRVM). The Cytoplasmic portion of the chain corresponds to 1 to 21 (MNVGTAHSEVNPNTRVMNSRG). 2 helical membrane passes run 22-42 (IWLSYVLAIGLLHVVLLSIPF) and 43-63 (VSVPVVWTLTNLIHNLGMYIF). Over 64–94 (LHTVKGTPFETPDQGKARLLTHWEQMDYGVQ) the chain is Cytoplasmic. The helical transmembrane segment at 95–117 (FTASRKFLTITPIVLYFLTSFYT) threads the bilayer. Over 118-121 (KYDQ) the chain is Extracellular. The helical transmembrane segment at 122 to 142 (VHFILNTVSLMTVLIPKLPQL) threads the bilayer. Pro-137 is modified (hydroxyproline). The Cytoplasmic portion of the chain corresponds to 143–153 (HGVRIFGINKY).

This sequence belongs to the ORM family. Ceramide-sensitive subunit of the serine palmitoyltransferase (SPT) complex, which is also composed of SPTLC1, SPTLC2/3 and SPTSSA/B. In terms of processing, when hydroxylated at Pro-137, ubiquitinated via 'Lys-48'-linkage, leading to proteasomal degradation. In endothelial cells, ORMDL3 proteasomal degradation is controlled by the sphingosine 1-phosphate receptor signaling pathway.

It is found in the endoplasmic reticulum membrane. Plays an essential role in the homeostatic regulation of sphingolipid de novo biosynthesis by modulating the activity of the serine palmitoyltransferase (SPT) in response to ceramide levels. When complexed to SPT, the binding of ceramides to its N-terminus stabilizes a conformation that block SPT substrate entry, hence preventing SPT catalytic activity. Through this mechanism, maintains ceramide levels at sufficient concentrations for the production of complex sphingolipids, but which prevents the accumulation of ceramides to levels that trigger apoptosis. This chain is ORM1-like protein 3 (Ormdl3), found in Mus musculus (Mouse).